A 205-amino-acid polypeptide reads, in one-letter code: Thymidine kinase (205 aa).

ATP-binding positions include 9–16 (SAMNAGKS) and 87–90 (DECQ). Glutamate 88 serves as the catalytic Proton acceptor. Zn(2+)-binding residues include cysteine 145, cysteine 147, cysteine 182, and histidine 185.

Belongs to the thymidine kinase family. As to quaternary structure, homotetramer.

It is found in the cytoplasm. The catalysed reaction is thymidine + ATP = dTMP + ADP + H(+). Allosteric enzyme which is feedback inhibited by dTTP and activated by a number of dNDP and dNTP. Its function is as follows. Phosphorylates both thymidine and deoxyuridine. This is Thymidine kinase from Escherichia coli O157:H7.